The primary structure comprises 690 residues: uncharacterized protein (690 aa).

This is an uncharacterized protein from Acanthamoeba polyphaga mimivirus (APMV).